A 364-amino-acid chain; its full sequence is CCA-adding enzyme (364 aa).

Residues glycine 19 and arginine 22 each coordinate ATP. CTP-binding residues include glycine 19 and arginine 22. Mg(2+)-binding residues include aspartate 32 and aspartate 34. ATP contacts are provided by arginine 102, arginine 148, and arginine 151. CTP contacts are provided by arginine 102, arginine 148, and arginine 151.

It belongs to the tRNA nucleotidyltransferase/poly(A) polymerase family. Bacterial CCA-adding enzyme type 2 subfamily. Mg(2+) is required as a cofactor.

The catalysed reaction is a tRNA precursor + 2 CTP + ATP = a tRNA with a 3' CCA end + 3 diphosphate. It catalyses the reaction a tRNA with a 3' CCA end + 2 CTP + ATP = a tRNA with a 3' CCACCA end + 3 diphosphate. Catalyzes the addition and repair of the essential 3'-terminal CCA sequence in tRNAs without using a nucleic acid template. Adds these three nucleotides in the order of C, C, and A to the tRNA nucleotide-73, using CTP and ATP as substrates and producing inorganic pyrophosphate. tRNA 3'-terminal CCA addition is required both for tRNA processing and repair. Also involved in tRNA surveillance by mediating tandem CCA addition to generate a CCACCA at the 3' terminus of unstable tRNAs. While stable tRNAs receive only 3'-terminal CCA, unstable tRNAs are marked with CCACCA and rapidly degraded. The chain is CCA-adding enzyme from Bordetella bronchiseptica (strain ATCC BAA-588 / NCTC 13252 / RB50) (Alcaligenes bronchisepticus).